A 123-amino-acid chain; its full sequence is Small ribosomal subunit protein uS12 (123 aa).

At aspartate 89 the chain carries 3-methylthioaspartic acid.

The protein belongs to the universal ribosomal protein uS12 family. In terms of assembly, part of the 30S ribosomal subunit. Contacts proteins S8 and S17. May interact with IF1 in the 30S initiation complex.

Its function is as follows. With S4 and S5 plays an important role in translational accuracy. Functionally, interacts with and stabilizes bases of the 16S rRNA that are involved in tRNA selection in the A site and with the mRNA backbone. Located at the interface of the 30S and 50S subunits, it traverses the body of the 30S subunit contacting proteins on the other side and probably holding the rRNA structure together. The combined cluster of proteins S8, S12 and S17 appears to hold together the shoulder and platform of the 30S subunit. The protein is Small ribosomal subunit protein uS12 of Nitrobacter hamburgensis (strain DSM 10229 / NCIMB 13809 / X14).